Reading from the N-terminus, the 431-residue chain is Serine/threonine-protein kinase Sgk1 (431 aa).

A necessary for localization to the mitochondria region spans residues 1-60 (MTVKTEAARDTLTYSRMRGMVAILIAFMKQRRMGLNDFIQKIANNSYACKHPEVQSILKI). The segment at 64–92 (QEPELMNANPSPPPSPSQQINLGPSSNPH) is disordered. At Ser-74 the chain carries Phosphoserine. At Ser-78 the chain carries Phosphoserine; by MAPK7. Residues 81–91 (QQINLGPSSNP) are compositionally biased toward polar residues. The Protein kinase domain occupies 98–355 (FHFLKVIGKG…FMEIKNHVFF (258 aa)). ATP-binding positions include 104–112 (IGKGSFGKV) and Lys-127. A Nuclear localization signal motif is present at residues 131–141 (KKAILKKKEEK). Catalysis depends on Asp-222, which acts as the Proton acceptor. Thr-256 bears the Phosphothreonine; by PDPK1 mark. In terms of domain architecture, AGC-kinase C-terminal spans 356–431 (SLINWEDLIN…SYAPPMDSFL (76 aa)). Thr-369 carries the phosphothreonine; by PKA modification. Phosphoserine occurs at positions 397, 401, and 422.

The protein belongs to the protein kinase superfamily. AGC Ser/Thr protein kinase family. As to quaternary structure, homodimer; disulfide-linked. Forms a trimeric complex with FBXW7 and NOTCH1. Interacts with MAPK3/ERK1, MAPK1/ERK2, MAP2K1/MEK1, MAP2K2/MEK2, NEDD4, NEDD4L, MAPT/TAU, MAPK7, CREB1, SLC9A3R2/NHERF2 and KCNJ1/ROMK1. Associates with the mammalian target of rapamycin complex 2 (mTORC2) via an interaction with MAPKAP1/SIN1. Regulated by phosphorylation. Activated by phosphorylation on Ser-422 by mTORC2, transforming it into a substrate for PDPK1 which phosphorylates it on Thr-256. Phosphorylation on Ser-397 and Ser-401 are also essential for its activity. Phosphorylation on Ser-78 by MAPK7 is required for growth factor-induced cell cycle progression. Post-translationally, ubiquitinated by NEDD4L; which promotes proteasomal degradation. Ubiquitinated by SYVN1 at the endoplasmic reticulum; which promotes rapid proteasomal degradation and maintains a high turnover rate in resting cells.

The protein localises to the cytoplasm. The protein resides in the nucleus. It is found in the endoplasmic reticulum membrane. It localises to the cell membrane. Its subcellular location is the mitochondrion. The catalysed reaction is L-seryl-[protein] + ATP = O-phospho-L-seryl-[protein] + ADP + H(+). It catalyses the reaction L-threonyl-[protein] + ATP = O-phospho-L-threonyl-[protein] + ADP + H(+). Two specific sites, one in the kinase domain (Thr-256) and the other in the C-terminal regulatory region (Ser-422), need to be phosphorylated for its full activation. Phosphorylation at Ser-397 and Ser-401 are also essential for its activity. Activated by WNK1, WNK2, WNK3 and WNK4; which promote phosphorylation by mTORC2. Functionally, serine/threonine-protein kinase which is involved in the regulation of a wide variety of ion channels, membrane transporters, cellular enzymes, transcription factors, neuronal excitability, cell growth, proliferation, survival, migration and apoptosis. Plays an important role in cellular stress response. Contributes to regulation of renal Na(+) retention, renal K(+) elimination, salt appetite, gastric acid secretion, intestinal Na(+)/H(+) exchange and nutrient transport, insulin-dependent salt sensitivity of blood pressure, salt sensitivity of peripheral glucose uptake, cardiac repolarization and memory consolidation. Up-regulates Na(+) channels: SCNN1A/ENAC, SCN5A and ASIC1/ACCN2, K(+) channels: KCNJ1/ROMK1, KCNA1-5, KCNQ1-5 and KCNE1, epithelial Ca(2+) channels: TRPV5 and TRPV6, chloride channels: BSND, CLCN2 and CFTR, glutamate transporters: SLC1A3/EAAT1, SLC1A2 /EAAT2, SLC1A1/EAAT3, SLC1A6/EAAT4 and SLC1A7/EAAT5, amino acid transporters: SLC1A5/ASCT2, SLC38A1/SN1 and SLC6A19, creatine transporter: SLC6A8, Na(+)/dicarboxylate cotransporter: SLC13A2/NADC1, Na(+)-dependent phosphate cotransporter: SLC34A2/NAPI-2B, glutamate receptor: GRIK2/GLUR6. Up-regulates carriers: SLC9A3/NHE3, SLC12A1/NKCC2, SLC12A3/NCC, SLC5A3/SMIT, SLC2A1/GLUT1, SLC5A1/SGLT1 and SLC15A2/PEPT2. Regulates enzymes: GSK3A/B, PMM2 and Na(+)/K(+) ATPase, and transcription factors: CTNNB1 and nuclear factor NF-kappa-B. Stimulates sodium transport into epithelial cells by enhancing the stability and expression of SCNN1A/ENAC. This is achieved by phosphorylating the NEDD4L ubiquitin E3 ligase, promoting its interaction with 14-3-3 proteins, thereby preventing it from binding to SCNN1A/ENAC and targeting it for degradation. Regulates store-operated Ca(+2) entry (SOCE) by stimulating ORAI1 and STIM1. Regulates KCNJ1/ROMK1 directly via its phosphorylation or indirectly via increased interaction with SLC9A3R2/NHERF2. Phosphorylates MDM2 and activates MDM2-dependent ubiquitination of p53/TP53. Phosphorylates MAPT/TAU and mediates microtubule depolymerization and neurite formation in hippocampal neurons. Phosphorylates SLC2A4/GLUT4 and up-regulates its activity. Phosphorylates APBB1/FE65 and promotes its localization to the nucleus. Phosphorylates MAPK1/ERK2 and activates it by enhancing its interaction with MAP2K1/MEK1 and MAP2K2/MEK2. Phosphorylates FBXW7 and plays an inhibitory role in the NOTCH1 signaling. Phosphorylates FOXO1 resulting in its relocalization from the nucleus to the cytoplasm. Phosphorylates FOXO3, promoting its exit from the nucleus and interference with FOXO3-dependent transcription. Phosphorylates BRAF and MAP3K3/MEKK3 and inhibits their activity. Phosphorylates SLC9A3/NHE3 in response to dexamethasone, resulting in its activation and increased localization at the cell membrane. Phosphorylates CREB1. Necessary for vascular remodeling during angiogenesis. The chain is Serine/threonine-protein kinase Sgk1 (SGK1) from Bos taurus (Bovine).